The primary structure comprises 607 residues: UvrABC system protein C (607 aa).

Positions 16 to 94 (GRPGVYRMFD…IKEWRPPYNI (79 aa)) constitute a GIY-YIG domain. Residues 203-238 (HALTNELSTAMEEAAINLEFERAAELRDQIALLRRV) form the UVR domain.

It belongs to the UvrC family. Interacts with UvrB in an incision complex.

It is found in the cytoplasm. The UvrABC repair system catalyzes the recognition and processing of DNA lesions. UvrC both incises the 5' and 3' sides of the lesion. The N-terminal half is responsible for the 3' incision and the C-terminal half is responsible for the 5' incision. The protein is UvrABC system protein C of Pseudomonas fluorescens (strain Pf0-1).